We begin with the raw amino-acid sequence, 102 residues long: Large ribosomal subunit protein bL21 (102 aa).

This sequence belongs to the bacterial ribosomal protein bL21 family. In terms of assembly, part of the 50S ribosomal subunit. Contacts protein L20.

This protein binds to 23S rRNA in the presence of protein L20. The sequence is that of Large ribosomal subunit protein bL21 from Clavibacter sepedonicus (Clavibacter michiganensis subsp. sepedonicus).